A 1360-amino-acid polypeptide reads, in one-letter code: TRAF2 and NCK-interacting protein kinase (1360 aa).

In terms of domain architecture, Protein kinase spans 25 to 289; sequence FELVELVGNG…TEQLMKHPFI (265 aa). Residues 31–39 and Lys-54 each bind ATP; that span reads VGNGTYGQV. Asp-153 (proton acceptor) is an active-site residue. Thr-187 carries the phosphothreonine modification. 3 disordered regions span residues 284 to 347, 398 to 440, and 539 to 589; these read MKHP…LPGE, QKEQ…RRRA, and ERSR…RPVD. The span at 288-307 shows a compositional bias: basic and acidic residues; the sequence is FIRDQPNERQVRIQLKDHID. The tract at residues 290–1047 is mediates interaction with NEDD4; sequence RDQPNERQVR…EIRKYKKRFN (758 aa). Residues 317 to 335 show a composition bias toward acidic residues; that stretch reads DETEYEYSGSEEEEEENDS. Phosphoserine is present on residues Ser-324 and Ser-326. Residues Ser-560 and Ser-570 each carry the phosphoserine modification. Position 581 is a phosphothreonine (Thr-581). 4 positions are modified to phosphoserine: Ser-600, Ser-608, Ser-610, and Ser-640. Disordered stretches follow at residues 601–801, 814–878, 908–927, and 933–998; these read QGPA…KAID, LRIE…YNVG, TSGEKKRSGHSDSNGFAGHI, and VQQS…ESSA. Over residues 652 to 669 the composition is skewed to basic and acidic residues; it reads RIEKFDRSSWLRQEEDIP. Phosphoserine occurs at positions 678, 680, 688, 701, 707, 720, 764, 766, and 769. Positions 720 to 755 are enriched in low complexity; that stretch reads SPLQRTSSGSSSSSSTPSSQPSSQGGSQPGSQAGSS. Composition is skewed to basic and acidic residues over residues 775 to 789 and 814 to 827; these read EPAKVKPEESRDITR and LRIEETNRPMKKVT. Positions 834 to 847 are enriched in acidic residues; the sequence is EESESSEEEEEDGE. Basic and acidic residues predominate over residues 908–917; that stretch reads TSGEKKRSGH. Ser-959 is modified (phosphoserine). The span at 987 to 996 shows a compositional bias: acidic residues; sequence TDEDEEDEES. A CNH domain is found at 1047-1334; it reads NSEILCAALW…KFLCERNDKV (288 aa).

Belongs to the protein kinase superfamily. STE Ser/Thr protein kinase family. STE20 subfamily. In terms of assembly, interacts (via the CNH domain) with RAP2A (GTP-bound form preferentially); the interaction is direct and required for the activation of TNIK by RAP2A. Interacts with NEDD4; recruits RAP2A to NEDD4. Interacts with TRAF2 and NCK. Interacts with TCF7L2/TCF4 and CTNNB1; the interaction is direct. Interacts with TANC1. In terms of processing, autophosphorylated. Autophosphorylation is activated by RAP2A and induces association to the cytoskeletal fraction. Expressed ubiquitously. Highest levels observed in heart, brain and skeletal muscle. Expressed in normal colonic epithelia and colorectal cancer tissues.

It localises to the nucleus. The protein localises to the cytoplasm. It is found in the recycling endosome. Its subcellular location is the cytoskeleton. It catalyses the reaction L-seryl-[protein] + ATP = O-phospho-L-seryl-[protein] + ADP + H(+). It carries out the reaction L-threonyl-[protein] + ATP = O-phospho-L-threonyl-[protein] + ADP + H(+). Functionally, serine/threonine kinase that acts as an essential activator of the Wnt signaling pathway. Recruited to promoters of Wnt target genes and required to activate their expression. May act by phosphorylating TCF4/TCF7L2. Appears to act upstream of the JUN N-terminal pathway. May play a role in the response to environmental stress. Part of a signaling complex composed of NEDD4, RAP2A and TNIK which regulates neuronal dendrite extension and arborization during development. More generally, it may play a role in cytoskeletal rearrangements and regulate cell spreading. Phosphorylates SMAD1 on Thr-322. Activator of the Hippo signaling pathway which plays a pivotal role in organ size control and tumor suppression by restricting proliferation and promoting apoptosis. MAP4Ks act in parallel to and are partially redundant with STK3/MST2 and STK4/MST2 in the phosphorylation and activation of LATS1/2, and establish MAP4Ks as components of the expanded Hippo pathway. The polypeptide is TRAF2 and NCK-interacting protein kinase (Homo sapiens (Human)).